Here is a 130-residue protein sequence, read N- to C-terminus: Small ribosomal subunit protein uS11c (130 aa).

Belongs to the universal ribosomal protein uS11 family. As to quaternary structure, part of the 30S ribosomal subunit.

It is found in the plastid. The protein resides in the chloroplast. The polypeptide is Small ribosomal subunit protein uS11c (Stigeoclonium helveticum (Green alga)).